Here is a 386-residue protein sequence, read N- to C-terminus: Flap endonuclease 1 (386 aa).

The segment at Met1 to Arg104 is N-domain. Asp34 lines the Mg(2+) pocket. Arg47 and Arg70 together coordinate DNA. 5 residues coordinate Mg(2+): Asp86, Glu158, Glu160, Asp179, and Asp181. Residues Glu122–Tyr253 are I-domain. Position 158 (Glu158) interacts with DNA. Gly231 and Asp233 together coordinate DNA. Mg(2+) is bound at residue Asp233. An interaction with PCNA region spans residues Thr336 to Phe344. Residues Val354–Lys386 are disordered.

It belongs to the XPG/RAD2 endonuclease family. FEN1 subfamily. In terms of assembly, interacts with PCNA. Three molecules of FEN1 bind to one PCNA trimer with each molecule binding to one PCNA monomer. PCNA stimulates the nuclease activity without altering cleavage specificity. It depends on Mg(2+) as a cofactor. Phosphorylated. Phosphorylation upon DNA damage induces relocalization to the nuclear plasma.

The protein localises to the nucleus. Its subcellular location is the nucleolus. It localises to the nucleoplasm. The protein resides in the mitochondrion. Functionally, structure-specific nuclease with 5'-flap endonuclease and 5'-3' exonuclease activities involved in DNA replication and repair. During DNA replication, cleaves the 5'-overhanging flap structure that is generated by displacement synthesis when DNA polymerase encounters the 5'-end of a downstream Okazaki fragment. It enters the flap from the 5'-end and then tracks to cleave the flap base, leaving a nick for ligation. Also involved in the long patch base excision repair (LP-BER) pathway, by cleaving within the apurinic/apyrimidinic (AP) site-terminated flap. Acts as a genome stabilization factor that prevents flaps from equilibrating into structures that lead to duplications and deletions. Also possesses 5'-3' exonuclease activity on nicked or gapped double-stranded DNA, and exhibits RNase H activity. Also involved in replication and repair of rDNA and in repairing mitochondrial DNA. This is Flap endonuclease 1 from Drosophila pseudoobscura pseudoobscura (Fruit fly).